The primary structure comprises 498 residues: Sulfate adenylyltransferase subunit 1 (498 aa).

The region spanning 30–246 (TRPLRLITCG…LELATTRSAQ (217 aa)) is the tr-type G domain. Residues 39 to 46 (GSVDDGKS) form a G1 region. 39 to 46 (GSVDDGKS) is a binding site for GTP. A G2 region spans residues 97–101 (GITID). Residues 118 to 121 (DTPG) are G3. GTP-binding positions include 118-122 (DTPGH) and 173-176 (NKID). Residues 173-176 (NKID) form a G4 region. The interval 210-212 (SAL) is G5.

This sequence belongs to the TRAFAC class translation factor GTPase superfamily. Classic translation factor GTPase family. CysN/NodQ subfamily. Heterodimer composed of CysD, the smaller subunit, and CysN.

The catalysed reaction is sulfate + ATP + H(+) = adenosine 5'-phosphosulfate + diphosphate. It participates in sulfur metabolism; hydrogen sulfide biosynthesis; sulfite from sulfate: step 1/3. With CysD forms the ATP sulfurylase (ATPS) that catalyzes the adenylation of sulfate producing adenosine 5'-phosphosulfate (APS) and diphosphate, the first enzymatic step in sulfur assimilation pathway. APS synthesis involves the formation of a high-energy phosphoric-sulfuric acid anhydride bond driven by GTP hydrolysis by CysN coupled to ATP hydrolysis by CysD. The protein is Sulfate adenylyltransferase subunit 1 of Rhizobium meliloti (strain 1021) (Ensifer meliloti).